We begin with the raw amino-acid sequence, 314 residues long: tRNA dimethylallyltransferase (314 aa).

10 to 17 (GPTGVGKT) serves as a coordination point for ATP. 12-17 (TGVGKT) lines the substrate pocket. An interaction with substrate tRNA region spans residues 35 to 38 (DSMQ).

It belongs to the IPP transferase family. Monomer. The cofactor is Mg(2+).

The enzyme catalyses adenosine(37) in tRNA + dimethylallyl diphosphate = N(6)-dimethylallyladenosine(37) in tRNA + diphosphate. Functionally, catalyzes the transfer of a dimethylallyl group onto the adenine at position 37 in tRNAs that read codons beginning with uridine, leading to the formation of N6-(dimethylallyl)adenosine (i(6)A). The protein is tRNA dimethylallyltransferase of Finegoldia magna (strain ATCC 29328 / DSM 20472 / WAL 2508) (Peptostreptococcus magnus).